A 517-amino-acid chain; its full sequence is MAWFLCLSVLVVLVLALAALLWRVRTRDRPQEAPSLPYLPVLGSLLSLRSPHPPHVLFKELQQKYGQTYSLKMGSHQVIIVNHHAHAREVLLKRGRTFAGRPRTVTTDVLTRDGKDIAFGDYSATWRFHRKIVHGALCMFGEGSASLQRIICTEAQSLCSTLSEAAATGLALDLSPELTRAVTNVICSLCFNSSYSRGDPEFEAMLRYSQGIVDTVAKDSLVDIFPWLQIFPNKDLRLLKQCVAVRDQLLQKKFEEHKSDYSDHVQRDLLDALLRAKRSAENNNTAAEFSAEAVGLSDDHLLMTVGDIFGAGVETTTTVLKWAITYLIHYPEVQKQIQEELDRKVGVDRPPQLSDRGSLPFLEATIREVLRIRPVAPLLIPHVALSDTSLGDFTVRKGTRVVINLWSLHHDEKEWTNPDLFNPGRFLSADGSSLTLPSSSYLPFGAGLRVCLGEALAKMELFLFLSWILQRFTLSVPPSQSLPSLEGKFGVVLQPVKYAVKATPRPGCHSGLFPANP.

Cys451 serves as a coordination point for heme.

The protein belongs to the cytochrome P450 family. Heme serves as cofactor.

It is found in the membrane. It catalyses the reaction a C21-steroid + reduced [NADPH--hemoprotein reductase] + O2 = a 17alpha-hydroxy-C21-steroid + oxidized [NADPH--hemoprotein reductase] + H2O + H(+). The catalysed reaction is 17alpha-hydroxyprogesterone + reduced [NADPH--hemoprotein reductase] + O2 = androst-4-ene-3,17-dione + acetate + oxidized [NADPH--hemoprotein reductase] + H2O + 2 H(+). It carries out the reaction 17alpha-hydroxypregnenolone + reduced [NADPH--hemoprotein reductase] + O2 = 3beta-hydroxyandrost-5-en-17-one + acetate + oxidized [NADPH--hemoprotein reductase] + H2O + 2 H(+). It participates in lipid metabolism; steroid biosynthesis. In terms of biological role, conversion of pregnenolone and progesterone to their 17-alpha-hydroxylated products and subsequently to dehydroepiandrosterone (DHEA) and androstenedione. Catalyzes both the 17-alpha-hydroxylation and the 17,20-lyase reaction. This Oryzias latipes (Japanese rice fish) protein is Steroid 17-alpha-hydroxylase/17,20 lyase (cyp17a1).